We begin with the raw amino-acid sequence, 257 residues long: Phosphatidylglycerol--prolipoprotein diacylglyceryl transferase (257 aa).

Transmembrane regions (helical) follow at residues Phe12–Ala32, Phe49–Glu69, Ile83–Ile103, and Leu109–Ile129. Residue Arg131 participates in a 1,2-diacyl-sn-glycero-3-phospho-(1'-sn-glycerol) binding. A run of 3 helical transmembrane segments spans residues Val167–Ile187, Gly197–Met217, and Gly226–Ile246.

It belongs to the Lgt family.

Its subcellular location is the cell membrane. It catalyses the reaction L-cysteinyl-[prolipoprotein] + a 1,2-diacyl-sn-glycero-3-phospho-(1'-sn-glycerol) = an S-1,2-diacyl-sn-glyceryl-L-cysteinyl-[prolipoprotein] + sn-glycerol 1-phosphate + H(+). Its pathway is protein modification; lipoprotein biosynthesis (diacylglyceryl transfer). Functionally, catalyzes the transfer of the diacylglyceryl group from phosphatidylglycerol to the sulfhydryl group of the N-terminal cysteine of a prolipoprotein, the first step in the formation of mature lipoproteins. In Streptococcus agalactiae serotype Ia (strain ATCC 27591 / A909 / CDC SS700), this protein is Phosphatidylglycerol--prolipoprotein diacylglyceryl transferase.